A 210-amino-acid chain; its full sequence is Orotate phosphoribosyltransferase (210 aa).

5-phospho-alpha-D-ribose 1-diphosphate contacts are provided by residues arginine 94, lysine 98, histidine 100, and 120-128; that span reads EDLISTGGS. Serine 124 provides a ligand contact to orotate.

The protein belongs to the purine/pyrimidine phosphoribosyltransferase family. PyrE subfamily. As to quaternary structure, homodimer. Mg(2+) is required as a cofactor.

The enzyme catalyses orotidine 5'-phosphate + diphosphate = orotate + 5-phospho-alpha-D-ribose 1-diphosphate. It participates in pyrimidine metabolism; UMP biosynthesis via de novo pathway; UMP from orotate: step 1/2. Catalyzes the transfer of a ribosyl phosphate group from 5-phosphoribose 1-diphosphate to orotate, leading to the formation of orotidine monophosphate (OMP). In Bacillus cereus (strain B4264), this protein is Orotate phosphoribosyltransferase.